Consider the following 224-residue polypeptide: Ribosomal RNA small subunit methyltransferase G (224 aa).

Residues Gly89, Phe94, 140–141 (AE), and Arg153 contribute to the S-adenosyl-L-methionine site.

The protein belongs to the methyltransferase superfamily. RNA methyltransferase RsmG family.

The protein localises to the cytoplasm. Specifically methylates the N7 position of a guanine in 16S rRNA. The polypeptide is Ribosomal RNA small subunit methyltransferase G (Bacteroides fragilis (strain YCH46)).